Reading from the N-terminus, the 207-residue chain is Outer-membrane lipoprotein carrier protein (207 aa).

The N-terminal stretch at 1-21 is a signal peptide; sequence MRLIRMLLATALTFSVIPAHA.

The protein belongs to the LolA family. Monomer.

The protein resides in the periplasm. Functionally, participates in the translocation of lipoproteins from the inner membrane to the outer membrane. Only forms a complex with a lipoprotein if the residue after the N-terminal Cys is not an aspartate (The Asp acts as a targeting signal to indicate that the lipoprotein should stay in the inner membrane). The protein is Outer-membrane lipoprotein carrier protein of Pseudomonas syringae pv. tomato (strain ATCC BAA-871 / DC3000).